We begin with the raw amino-acid sequence, 259 residues long: Uridylate kinase (259 aa).

Residue 21–24 (KLSG) participates in ATP binding. UMP is bound at residue glycine 63. ATP contacts are provided by glycine 64 and arginine 68. UMP is bound by residues aspartate 83 and 144–151 (TGNPYFTT). ATP contacts are provided by threonine 171, phenylalanine 177, and aspartate 180.

The protein belongs to the UMP kinase family. Homohexamer.

It localises to the cytoplasm. The enzyme catalyses UMP + ATP = UDP + ADP. It participates in pyrimidine metabolism; CTP biosynthesis via de novo pathway; UDP from UMP (UMPK route): step 1/1. With respect to regulation, inhibited by UTP. Catalyzes the reversible phosphorylation of UMP to UDP. The protein is Uridylate kinase of Salinibacter ruber (strain DSM 13855 / M31).